We begin with the raw amino-acid sequence, 336 residues long: Glyceraldehyde-3-phosphate dehydrogenase, chromosomal (336 aa).

NAD(+)-binding positions include 12-13 (RI), D37, R81, and S123. D-glyceraldehyde 3-phosphate is bound by residues 154 to 156 (SCT) and T185. C155 acts as the Nucleophile in catalysis. An NAD(+)-binding site is contributed by N186. D-glyceraldehyde 3-phosphate contacts are provided by residues R200, 213–214 (TG), and R236. N317 is an NAD(+) binding site.

This sequence belongs to the glyceraldehyde-3-phosphate dehydrogenase family. Homotetramer.

It catalyses the reaction D-glyceraldehyde 3-phosphate + phosphate + NAD(+) = (2R)-3-phospho-glyceroyl phosphate + NADH + H(+). It functions in the pathway carbohydrate biosynthesis; Calvin cycle. Its function is as follows. Could be involved in carbon fixation as a component of the Calvin cycle. Catalyzes the oxidative phosphorylation of glyceraldehyde 3-phosphate (G3P) to 1,3-bisphosphoglycerate (BPG) using the cofactor NAD. The first reaction step involves the formation of a hemiacetal intermediate between G3P and a cysteine residue, and this hemiacetal intermediate is then oxidized to a thioester, with concomitant reduction of NAD to NADH. The reduced NADH is then exchanged with the second NAD, and the thioester is attacked by a nucleophilic inorganic phosphate to produce BPG. The chain is Glyceraldehyde-3-phosphate dehydrogenase, chromosomal (cbbGC) from Cupriavidus necator (strain ATCC 17699 / DSM 428 / KCTC 22496 / NCIMB 10442 / H16 / Stanier 337) (Ralstonia eutropha).